Here is a 123-residue protein sequence, read N- to C-terminus: Large ribosomal subunit protein uL14 (123 aa).

It belongs to the universal ribosomal protein uL14 family. As to quaternary structure, part of the 50S ribosomal subunit. Forms a cluster with proteins L3 and L19. In the 70S ribosome, L14 and L19 interact and together make contacts with the 16S rRNA in bridges B5 and B8.

In terms of biological role, binds to 23S rRNA. Forms part of two intersubunit bridges in the 70S ribosome. This Enterobacter sp. (strain 638) protein is Large ribosomal subunit protein uL14.